The following is a 384-amino-acid chain: D-galactosamine-6-phosphate deaminase AgaS (384 aa).

SIS domains are found at residues 45-197 (LEPL…SQTF) and 215-364 (SEGV…PDTP).

This sequence belongs to the SIS family. AgaS subfamily.

The catalysed reaction is D-galactosamine 6-phosphate + H2O = D-tagatopyranose 1-phosphate + NH4(+). Functionally, catalyzes the isomerization-deamination of galactosamine 6-phosphate to form tagatofuranose 6-phosphate and ammonium ion. The chain is D-galactosamine-6-phosphate deaminase AgaS from Escherichia coli O157:H7.